The following is a 390-amino-acid chain: NADH-quinone oxidoreductase subunit D (390 aa).

The protein belongs to the complex I 49 kDa subunit family. In terms of assembly, NDH-1 is composed of 14 different subunits. Subunits NuoB, C, D, E, F, and G constitute the peripheral sector of the complex.

It localises to the cell inner membrane. The catalysed reaction is a quinone + NADH + 5 H(+)(in) = a quinol + NAD(+) + 4 H(+)(out). Its function is as follows. NDH-1 shuttles electrons from NADH, via FMN and iron-sulfur (Fe-S) centers, to quinones in the respiratory chain. The immediate electron acceptor for the enzyme in this species is believed to be ubiquinone. Couples the redox reaction to proton translocation (for every two electrons transferred, four hydrogen ions are translocated across the cytoplasmic membrane), and thus conserves the redox energy in a proton gradient. This Geobacter sulfurreducens (strain ATCC 51573 / DSM 12127 / PCA) protein is NADH-quinone oxidoreductase subunit D.